Consider the following 357-residue polypeptide: N-acetyl-gamma-glutamyl-phosphate reductase (357 aa).

Residue cysteine 160 is part of the active site.

It belongs to the NAGSA dehydrogenase family. Type 1 subfamily.

It is found in the cytoplasm. It carries out the reaction N-acetyl-L-glutamate 5-semialdehyde + phosphate + NADP(+) = N-acetyl-L-glutamyl 5-phosphate + NADPH + H(+). The protein operates within amino-acid biosynthesis; L-arginine biosynthesis; N(2)-acetyl-L-ornithine from L-glutamate: step 3/4. Catalyzes the NADPH-dependent reduction of N-acetyl-5-glutamyl phosphate to yield N-acetyl-L-glutamate 5-semialdehyde. The polypeptide is N-acetyl-gamma-glutamyl-phosphate reductase (Prochlorococcus marinus (strain MIT 9313)).